The chain runs to 549 residues: MKNINFNNTQSYQDLKNHFRKIKNIHLRDLFASDLNRFKKFSIIFENEMLIDFSKNRITDETLIYLLNLAKETDVKSGIKLMFSGAKINKTENRSVLHIALRNRTNRPIILNNCNIMLEVNALLEKMKNFSKMVIHGEWKGYTGKSISNVVNIGIGGSDLGPYMVTEALRPYKNHLNMYYVSNIDGTHLTEVLKKINPENTIFLIASKTFTTDETITNAHSAKKWFLHYSQDQSTLDKHFFALSANIKNALNFGININNIFKFWDWVGGRFSLWSSAGLSIMLSIGFDNFEKFLDGAHAMDNHFYHTNYKENIPILLALISIWYTNFFGSETEAIFPYDQYMHRFSAYFQQSNMESNGKSINRNGQRINYQTGPIIWGEPGTNGQHAFYQLIHQGTRLIPCDFIAPVFSHNDLNNHHMKLISNFFAQTQALAFGQSRDSILHRLILSKKNQDDIKRILPFKICKGNQPTNSILIRKITPYNLGALIALYEHKIFVQGYILNIFSFDQWGVELGKELSQNIYNYLNINIKNKSYDASTEGLINFYKSFMI.

Glutamate 355 acts as the Proton donor in catalysis. Active-site residues include histidine 386 and lysine 514.

It belongs to the GPI family.

The protein localises to the cytoplasm. It carries out the reaction alpha-D-glucose 6-phosphate = beta-D-fructose 6-phosphate. It participates in carbohydrate biosynthesis; gluconeogenesis. Its pathway is carbohydrate degradation; glycolysis; D-glyceraldehyde 3-phosphate and glycerone phosphate from D-glucose: step 2/4. Its function is as follows. Catalyzes the reversible isomerization of glucose-6-phosphate to fructose-6-phosphate. The sequence is that of Glucose-6-phosphate isomerase from Buchnera aphidicola subsp. Acyrthosiphon pisum (strain 5A).